Consider the following 31-residue polypeptide: IVGGVEAVPGVWPYQAALFIIDMYFCGGSLI.

Residues 1 to 31 enclose the Peptidase S1 domain; the sequence is IVGGVEAVPGVWPYQAALFIIDMYFCGGSLI.

It belongs to the peptidase S1 family.

Its subcellular location is the secreted. It is found in the extracellular space. The catalysed reaction is Preferential cleavage: Tyr-|-Xaa, Trp-|-Xaa, Phe-|-Xaa, Leu-|-Xaa.. The chain is Chymotrypsin from Penaeus monodon (Giant tiger prawn).